Reading from the N-terminus, the 267-residue chain is L-aspartate dehydrogenase (267 aa).

NAD(+)-binding residues include alanine 124 and asparagine 190. The active site involves histidine 218.

The protein belongs to the L-aspartate dehydrogenase family.

The catalysed reaction is L-aspartate + NADP(+) + H2O = oxaloacetate + NH4(+) + NADPH + H(+). The enzyme catalyses L-aspartate + NAD(+) + H2O = oxaloacetate + NH4(+) + NADH + H(+). It participates in cofactor biosynthesis; NAD(+) biosynthesis; iminoaspartate from L-aspartate (dehydrogenase route): step 1/1. In terms of biological role, specifically catalyzes the NAD or NADP-dependent dehydrogenation of L-aspartate to iminoaspartate. In Methanococcus maripaludis (strain C6 / ATCC BAA-1332), this protein is L-aspartate dehydrogenase.